Here is a 238-residue protein sequence, read N- to C-terminus: tRNA (guanine-N(7)-)-methyltransferase (238 aa).

S-adenosyl-L-methionine contacts are provided by Glu-68, Glu-93, Asp-120, and Asp-143. The active site involves Asp-143. Residues Lys-147, Asp-179, and 216–219 each bind substrate; that span reads TKFE.

This sequence belongs to the class I-like SAM-binding methyltransferase superfamily. TrmB family.

The enzyme catalyses guanosine(46) in tRNA + S-adenosyl-L-methionine = N(7)-methylguanosine(46) in tRNA + S-adenosyl-L-homocysteine. Its pathway is tRNA modification; N(7)-methylguanine-tRNA biosynthesis. Functionally, catalyzes the formation of N(7)-methylguanine at position 46 (m7G46) in tRNA. This is tRNA (guanine-N(7)-)-methyltransferase from Shewanella putrefaciens (strain CN-32 / ATCC BAA-453).